The following is a 137-amino-acid chain: Glutamyl-tRNA(Gln) amidotransferase subunit C, chloroplastic/mitochondrial (137 aa).

Belongs to the GatC family. As to quaternary structure, subunit of the heterotrimeric GatCAB amidotransferase (AdT) complex, composed of A, B and C subunits.

Its subcellular location is the mitochondrion. The protein localises to the plastid. The protein resides in the chloroplast. The catalysed reaction is L-glutamyl-tRNA(Gln) + L-glutamine + ATP + H2O = L-glutaminyl-tRNA(Gln) + L-glutamate + ADP + phosphate + H(+). In terms of biological role, allows the formation of correctly charged Gln-tRNA(Gln) through the transamidation of misacylated Glu-tRNA(Gln) in chloroplasts and mitochondria. The reaction takes place in the presence of glutamine and ATP through an activated gamma-phospho-Glu-tRNA(Gln). This Vitis vinifera (Grape) protein is Glutamyl-tRNA(Gln) amidotransferase subunit C, chloroplastic/mitochondrial.